We begin with the raw amino-acid sequence, 258 residues long: Deoxyribose-phosphate aldolase (258 aa).

The active-site Proton donor/acceptor is the Asp102. Residue Lys165 is the Schiff-base intermediate with acetaldehyde of the active site. Lys199 serves as the catalytic Proton donor/acceptor.

It belongs to the DeoC/FbaB aldolase family. DeoC type 2 subfamily.

It is found in the cytoplasm. The catalysed reaction is 2-deoxy-D-ribose 5-phosphate = D-glyceraldehyde 3-phosphate + acetaldehyde. The protein operates within carbohydrate degradation; 2-deoxy-D-ribose 1-phosphate degradation; D-glyceraldehyde 3-phosphate and acetaldehyde from 2-deoxy-alpha-D-ribose 1-phosphate: step 2/2. Catalyzes a reversible aldol reaction between acetaldehyde and D-glyceraldehyde 3-phosphate to generate 2-deoxy-D-ribose 5-phosphate. The polypeptide is Deoxyribose-phosphate aldolase (Aliivibrio fischeri (strain MJ11) (Vibrio fischeri)).